The following is a 355-amino-acid chain: tRNA-specific 2-thiouridylase MnmA 1 (355 aa).

6-13 serves as a coordination point for ATP; the sequence is LLSGGVDS. The interaction with target base in tRNA stretch occupies residues 92–94; that stretch reads NPD. Cys-97 acts as the Nucleophile in catalysis. A disulfide bridge connects residues Cys-97 and Cys-192. Gly-120 lines the ATP pocket. The interval 142–144 is interaction with tRNA; the sequence is KDQ. Cys-192 serves as the catalytic Cysteine persulfide intermediate.

The protein belongs to the MnmA/TRMU family.

The protein localises to the cytoplasm. It catalyses the reaction S-sulfanyl-L-cysteinyl-[protein] + uridine(34) in tRNA + AH2 + ATP = 2-thiouridine(34) in tRNA + L-cysteinyl-[protein] + A + AMP + diphosphate + H(+). In terms of biological role, catalyzes the 2-thiolation of uridine at the wobble position (U34) of tRNA, leading to the formation of s(2)U34. In Bacteroides thetaiotaomicron (strain ATCC 29148 / DSM 2079 / JCM 5827 / CCUG 10774 / NCTC 10582 / VPI-5482 / E50), this protein is tRNA-specific 2-thiouridylase MnmA 1.